The following is a 587-amino-acid chain: Cyclic di-GMP phosphodiesterase PA2567 (587 aa).

A GAF domain is found at 28-157; sequence DEVFEEILAA…LEHFARLVMA (130 aa). The GGDEF domain occupies 192-327; the sequence is GALTVIAADL…GVGWARYNPP (136 aa). One can recognise an EAL domain in the interval 335 to 587; sequence AFTLLTSLSQ…PEQLEDWLRR (253 aa).

The enzyme catalyses 3',3'-c-di-GMP + H2O = 5'-phosphoguanylyl(3'-&gt;5')guanosine + H(+). Phosphodiesterase (PDE) that catalyzes the hydrolysis of cyclic diguanylate (c-di-GMP) to 5'-pGpG. The polypeptide is Cyclic di-GMP phosphodiesterase PA2567 (Pseudomonas aeruginosa (strain ATCC 15692 / DSM 22644 / CIP 104116 / JCM 14847 / LMG 12228 / 1C / PRS 101 / PAO1)).